A 463-amino-acid chain; its full sequence is Putative pentatricopeptide repeat-containing protein At4g17915 (463 aa).

12 PPR repeats span residues 12 to 46 (STRL…GVDP), 47 to 81 (DVVT…GIRP), 82 to 116 (DVAT…GIYP), 117 to 152 (DLWS…GLNP), 153 to 186 (GPDT…RFKP), 187 to 221 (ELMT…GYTP), 222 to 256 (NAVT…GYTY), 257 to 291 (DGYA…GRRH), 292 to 326 (DIVS…GMKA), 327 to 361 (DEYT…GIGL), 362 to 392 (NLVT…MEVK), and 393 to 427 (DEYT…GIKI).

The protein belongs to the PPR family. P subfamily.

The polypeptide is Putative pentatricopeptide repeat-containing protein At4g17915 (Arabidopsis thaliana (Mouse-ear cress)).